Here is a 193-residue protein sequence, read N- to C-terminus: Peptidyl-tRNA hydrolase (193 aa).

Position 16 (tyrosine 16) interacts with tRNA. Histidine 21 (proton acceptor) is an active-site residue. TRNA is bound by residues tyrosine 66, asparagine 68, and asparagine 114.

Belongs to the PTH family. As to quaternary structure, monomer.

It localises to the cytoplasm. It carries out the reaction an N-acyl-L-alpha-aminoacyl-tRNA + H2O = an N-acyl-L-amino acid + a tRNA + H(+). Its function is as follows. Hydrolyzes ribosome-free peptidyl-tRNAs (with 1 or more amino acids incorporated), which drop off the ribosome during protein synthesis, or as a result of ribosome stalling. Functionally, catalyzes the release of premature peptidyl moieties from peptidyl-tRNA molecules trapped in stalled 50S ribosomal subunits, and thus maintains levels of free tRNAs and 50S ribosomes. The polypeptide is Peptidyl-tRNA hydrolase (Geobacter sulfurreducens (strain ATCC 51573 / DSM 12127 / PCA)).